We begin with the raw amino-acid sequence, 990 residues long: Translation initiation factor IF-2 (990 aa).

Residues 92–402 (KKRTFVKRDD…QRDEHLQAAP (311 aa)) are disordered. 2 stretches are compositionally biased toward low complexity: residues 104–116 (EGAA…AAFA) and 131–151 (EAPA…AAPA). Residues 158 to 201 (ELARREEQARHQAELIRRQEAELAAKRAAREAREKREREAEERA) show a composition bias toward basic and acidic residues. Positions 223 to 243 (TREQAAEATARNAAQLQARAK) are enriched in low complexity. Positions 244 to 264 (AAAESKARSDEEAARAADLDA) are enriched in basic and acidic residues. Composition is skewed to low complexity over residues 281-290 (ATPKKAVMVA) and 318-342 (PAVG…PGAG). 2 stretches are compositionally biased toward basic and acidic residues: residues 358-368 (PAKKKEIKTRG) and 386-398 (RRGD…DEHL). A tr-type G domain is found at 490–659 (PRAPVVTVMG…LLQADVMELK (170 aa)). The tract at residues 499 to 506 (GHVDHGKT) is G1. 499-506 (GHVDHGKT) lines the GTP pocket. Residues 524-528 (GITQH) are G2. The segment at 545 to 548 (DTPG) is G3. Residues 545–549 (DTPGH) and 599–602 (TKAD) contribute to the GTP site. The interval 599–602 (TKAD) is G4. The segment at 635-637 (SSK) is G5.

This sequence belongs to the TRAFAC class translation factor GTPase superfamily. Classic translation factor GTPase family. IF-2 subfamily.

The protein resides in the cytoplasm. One of the essential components for the initiation of protein synthesis. Protects formylmethionyl-tRNA from spontaneous hydrolysis and promotes its binding to the 30S ribosomal subunits. Also involved in the hydrolysis of GTP during the formation of the 70S ribosomal complex. The chain is Translation initiation factor IF-2 from Verminephrobacter eiseniae (strain EF01-2).